The following is a 94-amino-acid chain: Translation initiation factor IF-1 (94 aa).

Positions 1–72 (MAKEELIQFE…EKGRLIFRHK (72 aa)) constitute an S1-like domain. The interval 71–94 (HKDERPGGTGAPRSGPPRGQFRRR) is disordered.

This sequence belongs to the IF-1 family. Component of the 30S ribosomal translation pre-initiation complex which assembles on the 30S ribosome in the order IF-2 and IF-3, IF-1 and N-formylmethionyl-tRNA(fMet); mRNA recruitment can occur at any time during PIC assembly.

It is found in the cytoplasm. One of the essential components for the initiation of protein synthesis. Stabilizes the binding of IF-2 and IF-3 on the 30S subunit to which N-formylmethionyl-tRNA(fMet) subsequently binds. Helps modulate mRNA selection, yielding the 30S pre-initiation complex (PIC). Upon addition of the 50S ribosomal subunit IF-1, IF-2 and IF-3 are released leaving the mature 70S translation initiation complex. The protein is Translation initiation factor IF-1 of Rhodopseudomonas palustris (strain HaA2).